The following is a 1206-amino-acid chain: DNA polymerase (1206 aa).

The protein belongs to the DNA polymerase type-B family.

It catalyses the reaction DNA(n) + a 2'-deoxyribonucleoside 5'-triphosphate = DNA(n+1) + diphosphate. The chain is DNA polymerase (dpo) from Pyramimonas orientalis virus (PoV01).